The sequence spans 395 residues: Ketol-acid reductoisomerase, mitochondrial (395 aa).

The transit peptide at 1–47 directs the protein to the mitochondrion; sequence MLRTQAARLICNSRVITAKRTFALATRAAAYSRPAARFVKPMITTRG. Residues 57-246 form the KARI N-terminal Rossmann domain; that stretch reads VETVYERADW…AIGSGYVYQT (190 aa). NADP(+) contacts are provided by residues 84–93, 108–113, and 146–150; these read GYGSQGYGQG, RKDGAS, and SDAAQ. Residue H171 is part of the active site. The 148-residue stretch at 247 to 394 folds into the KARI C-terminal knotted domain; sequence TFEREVNSDL…KEVRKLRPEN (148 aa). Residues D255, E259, E291, and E295 each contribute to the Mg(2+) site. S317 is a substrate binding site. The residue at position 355 (S355) is a Phosphoserine. The interval 363-395 is hydrophilic; it reads DYREKLEKELDTIRNMEIWKVGKEVRKLRPENQ.

The protein belongs to the ketol-acid reductoisomerase family. Mg(2+) serves as cofactor.

Its subcellular location is the mitochondrion. The catalysed reaction is (2R)-2,3-dihydroxy-3-methylbutanoate + NADP(+) = (2S)-2-acetolactate + NADPH + H(+). The enzyme catalyses (2R,3R)-2,3-dihydroxy-3-methylpentanoate + NADP(+) = (S)-2-ethyl-2-hydroxy-3-oxobutanoate + NADPH + H(+). It participates in amino-acid biosynthesis; L-isoleucine biosynthesis; L-isoleucine from 2-oxobutanoate: step 2/4. The protein operates within amino-acid biosynthesis; L-valine biosynthesis; L-valine from pyruvate: step 2/4. Functionally, involved in the biosynthesis of branched-chain amino acids (BCAA). Catalyzes the second common step in the parallel biosynthesis of isoleucine and valine. Converts alpha-aceto-alpha-hydroxybutyrate (AHB) to alpha,beta-dihydroxy-beta-methylvalerate (DHMV) and alpha-acetolactate (AL) to alpha,beta-dihydroxy-isovalerate (DHV) in isoleucine and valine biosynthesis, respectively. The sequence is that of Ketol-acid reductoisomerase, mitochondrial from Saccharomyces cerevisiae (strain ATCC 204508 / S288c) (Baker's yeast).